We begin with the raw amino-acid sequence, 217 residues long: Imidazole glycerol phosphate synthase subunit HisH (217 aa).

Residues 1-212 form the Glutamine amidotransferase type-1 domain; the sequence is MLAILDYKAG…YEYCRQSRQE (212 aa). The Nucleophile role is filled by Cys-79. Residues His-187 and Glu-189 contribute to the active site.

As to quaternary structure, heterodimer of HisH and HisF.

It is found in the cytoplasm. It catalyses the reaction 5-[(5-phospho-1-deoxy-D-ribulos-1-ylimino)methylamino]-1-(5-phospho-beta-D-ribosyl)imidazole-4-carboxamide + L-glutamine = D-erythro-1-(imidazol-4-yl)glycerol 3-phosphate + 5-amino-1-(5-phospho-beta-D-ribosyl)imidazole-4-carboxamide + L-glutamate + H(+). The catalysed reaction is L-glutamine + H2O = L-glutamate + NH4(+). Its pathway is amino-acid biosynthesis; L-histidine biosynthesis; L-histidine from 5-phospho-alpha-D-ribose 1-diphosphate: step 5/9. Functionally, IGPS catalyzes the conversion of PRFAR and glutamine to IGP, AICAR and glutamate. The HisH subunit catalyzes the hydrolysis of glutamine to glutamate and ammonia as part of the synthesis of IGP and AICAR. The resulting ammonia molecule is channeled to the active site of HisF. In Desulfovibrio desulfuricans (strain ATCC 27774 / DSM 6949 / MB), this protein is Imidazole glycerol phosphate synthase subunit HisH.